The sequence spans 284 residues: Tropomyosin alpha-1 chain (284 aa).

Met1 carries the post-translational modification N-acetylmethionine. Residues Met1 to Gln38 are disordered. Residues Met1–Ile284 adopt a coiled-coil conformation. A compositionally biased stretch (basic and acidic residues) spans Lys12–Gln38. Ser45 is subject to Phosphoserine. The disordered stretch occupies residues Ala116–Lys136. Phosphoserine occurs at positions 174, 186, 206, and 252. Tyr261 carries the phosphotyrosine modification. Residues Ser271 and Ser283 each carry the phosphoserine modification.

It belongs to the tropomyosin family. As to quaternary structure, homodimer. Heterodimer of an alpha (TPM1, TPM3 or TPM4) and a beta (TPM2) chain. Interacts with HRG (via the HRR domain); the interaction contributes to the antiangiogenic properties of the histidine/proline-rich region (HRR) of HRG. Interacts (via N-terminus) with LMOD2 (via N-terminus) and TMOD1 (via N-terminus). In terms of processing, phosphorylated at Ser-283 by DAPK1 in response to oxidative stress and this phosphorylation enhances stress fiber formation in endothelial cells.

It is found in the cytoplasm. The protein resides in the cytoskeleton. Binds to actin filaments in muscle and non-muscle cells. Plays a central role, in association with the troponin complex, in the calcium dependent regulation of vertebrate striated muscle contraction. Smooth muscle contraction is regulated by interaction with caldesmon. In non-muscle cells is implicated in stabilizing cytoskeleton actin filaments. This is Tropomyosin alpha-1 chain (Tpm1) from Mus musculus (Mouse).